Here is a 371-residue protein sequence, read N- to C-terminus: Cytochrome b (371 aa).

The next 4 membrane-spanning stretches (helical) occupy residues 25 to 45 (FGSM…FLAV), 69 to 90 (WMMQ…YIHI), 105 to 125 (WMSG…GYVL), and 170 to 190 (FFAL…LHVI). Residues His75 and His89 each contribute to the heme b site. Positions 174 and 188 each coordinate heme b. His193 lines the a ubiquinone pocket. Transmembrane regions (helical) follow at residues 218–238 (HKDL…VSFF), 280–300 (LGGA…PFTH), 312–332 (LSQL…WAAT), and 339–358 (FITI…LSIP).

Belongs to the cytochrome b family. As to quaternary structure, the cytochrome bc1 complex contains 3 respiratory subunits (MT-CYB, CYC1 and UQCRFS1), 2 core proteins (UQCRC1 and UQCRC2) and probably 6 low-molecular weight proteins. It depends on heme b as a cofactor.

The protein resides in the mitochondrion inner membrane. Functionally, component of the ubiquinol-cytochrome c reductase complex (complex III or cytochrome b-c1 complex) that is part of the mitochondrial respiratory chain. The b-c1 complex mediates electron transfer from ubiquinol to cytochrome c. Contributes to the generation of a proton gradient across the mitochondrial membrane that is then used for ATP synthesis. The sequence is that of Cytochrome b (MT-CYB) from Liasis mackloti savuensis (Savu python).